A 69-amino-acid polypeptide reads, in one-letter code: MAAARNLRTALIFGGFISMVGAAFYPIYFRPLMRLEEYQKEQAVNRAGIVQEDVQPPGLKVWSDPFGRK.

Topologically, residues 1–8 (MAAARNLR) are mitochondrial matrix. A helical membrane pass occupies residues 9-29 (TALIFGGFISMVGAAFYPIYF). Over 30–69 (RPLMRLEEYQKEQAVNRAGIVQEDVQPPGLKVWSDPFGRK) the chain is Mitochondrial intermembrane. F66 is modified (phenylalanine amide).

Component of the MITRAC (mitochondrial translation regulation assembly intermediate of cytochrome c oxidase complex) complex, the core components of this complex being COA3/MITRAC12 and COX14. Interacts with COA3/MITRAC12 and COX4I1. Directly interacts with newly synthesized MT-CO1/COX1. Highly expressed in the hypothalamus, the spinal cord, and sensory ganglia (at protein level). Also expressed on in the epidermis and dermis layers of the skin (at protein level). Expressed in preadipocytes and adipocytes (at protein level). Expressed in the ovary, specifically in granulosa cells of follicles that have passed the primary stage and in oocytes (at protein level).

The protein resides in the mitochondrion inner membrane. Its subcellular location is the secreted. Functionally, component of the MITRAC (mitochondrial translation regulation assembly intermediate of cytochrome c oxidase complex) complex, that regulates cytochrome c oxidase assembly. Promotes the progression of complex assembly after the association of MT-CO1/COX1 with COX4I1 and COX6C. Chaperone-like assembly factor required to stabilize newly synthesized MT-CO1/COX1 and to prevent its premature turnover. Peptide involved in a broad spectrum of regulatory functions. Is a ligand for GPR173. As part of the reproductive cycle, it regulates gonadotropin-releasing hormone (GnRH) signaling in the hypothalamus and pituitary gland which augments the release of luteinizing hormone. More specifically, it regulates the expression of transcription factors CEBPB and POU2F1/OCT1 through the cAMP-PKA signaling pathway, which subsequently regulate the expression of GNRHR and KISS1. Plays a protective role in memory retention through activation of GNRHR. Regulates the secretion of AVP by hypothalamic neurons. Plays a role in the transduction of the itch sensation. Induces anxiolytic effects, reducing behavior associated with anxiety. Regulates food intake as well as satiation and satiety by increasing Nucb2 expression in neurons. In the ovary, it regulates follicular growth by stimulating granulosa cell proliferation by increasing the expression of GPR173, CREB1, CYP19A1, KITLG, FSHR, and LHCGR. It also increases the production of estradiol (E2). In the heart, it regulates contractility and relaxation by activating the AKT1-NOS3 and MAPK1-MAPK3 signaling pathways. It also plays a cardioprotective role during ischemia, where it activates the SAFE and RISK pathways. Stimulates the proliferation and differentiation of preadipocytes. In pancreatic islet cells, it induces proliferation of islet cells as well as the production of INS through activation of the MAPK1-MAPK3 signaling pathways. This is Small integral membrane protein 20 from Mus musculus (Mouse).